Consider the following 1005-residue polypeptide: Mediator of RNA polymerase II transcription subunit 24 (1005 aa).

Belongs to the Mediator complex subunit 24 family. Component of the Mediator complex.

The protein localises to the nucleus. In terms of biological role, component of the Mediator complex, a coactivator involved in the regulated transcription of nearly all RNA polymerase II-dependent genes. Mediator functions as a bridge to convey information from gene-specific regulatory proteins to the basal RNA polymerase II transcription machinery. Mediator is recruited to promoters by direct interactions with regulatory proteins and serves as a scaffold for the assembly of a functional preinitiation complex with RNA polymerase II and the general transcription factors. This is Mediator of RNA polymerase II transcription subunit 24 (MED24) from Aedes aegypti (Yellowfever mosquito).